The sequence spans 510 residues: Beta-galactosidase (510 aa).

Glu210 serves as the catalytic Proton donor. The active-site Nucleophile is the Glu414.

Belongs to the glycosyl hydrolase 1 family.

It carries out the reaction Hydrolysis of terminal non-reducing beta-D-galactose residues in beta-D-galactosides.. The protein is Beta-galactosidase of Pyrococcus woesei.